Reading from the N-terminus, the 105-residue chain is Blood plasma apolipoprotein LAL1 (105 aa).

The first 21 residues, Met-1–Ser-21, serve as a signal peptide directing secretion. A propeptide spanning residues Glu-22–Ser-29 is cleaved from the precursor.

In terms of tissue distribution, plasma.

The protein localises to the secreted. The protein is Blood plasma apolipoprotein LAL1 of Petromyzon marinus (Sea lamprey).